Here is a 603-residue protein sequence, read N- to C-terminus: Prostaglandin G/H synthase 1 (603 aa).

The N-terminal stretch at 1–27 is a signal peptide; that stretch reads MSRGSRLHRWPLLLLLLLLLPPPPVLP. The EGF-like domain occupies 35-73; sequence PVNPCCYYPCQHQGICVRFGLDRYQCDCTRTGYSGPNCT. Intrachain disulfides connect C39-C50, C40-C162, C44-C60, and C62-C72. N-linked (GlcNAc...) asparagine glycans are attached at residues N71, N107, and N147. The active-site Proton acceptor is the H210. Y388 acts as the For cyclooxygenase activity in catalysis. Residue H391 participates in heme b binding. C572 and C578 are oxidised to a cystine.

Belongs to the prostaglandin G/H synthase family. As to quaternary structure, homodimer. It depends on heme b as a cofactor. In terms of processing, N-glycosylated. N-linked glycosylation is necessary for enzymatic activity. Brain cortex. Isoform 2 is expressed in the cerebral cortex and heart.

Its subcellular location is the microsome membrane. The protein resides in the endoplasmic reticulum membrane. The catalysed reaction is (5Z,8Z,11Z,14Z)-eicosatetraenoate + AH2 + 2 O2 = prostaglandin H2 + A + H2O. It catalyses the reaction (5Z,8Z,11Z,14Z)-eicosatetraenoate + 2 O2 = prostaglandin G2. It carries out the reaction prostaglandin G2 + AH2 = prostaglandin H2 + A + H2O. The enzyme catalyses (9Z,12Z)-octadecadienoate + AH2 + O2 = (9R)-hydroxy-(10E,12Z)-octadecadienoate + A + H2O. The catalysed reaction is (9Z,12Z)-octadecadienoate + AH2 + O2 = (9S)-hydroxy-(10E,12Z)-octadecadienoate + A + H2O. It catalyses the reaction (9Z,12Z)-octadecadienoate + AH2 + O2 = (13S)-hydroxy-(9Z,11E)-octadecadienoate + A + H2O. It carries out the reaction (9Z,12Z)-octadecadienoate + AH2 + O2 = (13R)-hydroxy-(9Z,11E)-octadecadienoate + A + H2O. It functions in the pathway lipid metabolism; prostaglandin biosynthesis. With respect to regulation, the cyclooxygenase activity is inhibited by nonsteroidal anti-inflammatory drugs (NSAIDs) including ibuprofen, flurbiprofen, ketoprofen, naproxen, flurbiprofen, anirolac, fenclofenac and diclofenac. Dual cyclooxygenase and peroxidase that plays an important role in the biosynthesis pathway of prostanoids, a class of C20 oxylipins mainly derived from arachidonate ((5Z,8Z,11Z,14Z)-eicosatetraenoate, AA, C20:4(n-6)), with a particular role in the inflammatory response. The cyclooxygenase activity oxygenates AA to the hydroperoxy endoperoxide prostaglandin G2 (PGG2), and the peroxidase activity reduces PGG2 to the hydroxy endoperoxide prostaglandin H2 (PGH2), the precursor of all 2-series prostaglandins and thromboxanes. This complex transformation is initiated by abstraction of hydrogen at carbon 13 (with S-stereochemistry), followed by insertion of molecular O2 to form the endoperoxide bridge between carbon 9 and 11 that defines prostaglandins. The insertion of a second molecule of O2 (bis-oxygenase activity) yields a hydroperoxy group in PGG2 that is then reduced to PGH2 by two electrons. Involved in the constitutive production of prostanoids in particular in the stomach and platelets. In gastric epithelial cells, it is a key step in the generation of prostaglandins, such as prostaglandin E2 (PGE2), which plays an important role in cytoprotection. In platelets, it is involved in the generation of thromboxane A2 (TXA2), which promotes platelet activation and aggregation, vasoconstriction and proliferation of vascular smooth muscle cells. Can also use linoleate (LA, (9Z,12Z)-octadecadienoate, C18:2(n-6)) as substrate and produce hydroxyoctadecadienoates (HODEs) in a regio- and stereospecific manner, being (9R)-HODE ((9R)-hydroxy-(10E,12Z)-octadecadienoate) and (13S)-HODE ((13S)-hydroxy-(9Z,11E)-octadecadienoate) its major products. The polypeptide is Prostaglandin G/H synthase 1 (PTGS1) (Canis lupus familiaris (Dog)).